We begin with the raw amino-acid sequence, 140 residues long: MATIAQLIRHDRKDKFKKSKSPALMYTYNSLKKKRTYNPSPYKRGVCTRVGTMTPKKPNSALRKYAKVKLTNGYEVLAYIPGEGHNLQEHSVVLIEGGRVKDLPGVRYHIVRGTLDTSGVEKRRQQRSGYGAKRPKEKKE.

Disordered stretches follow at residues 36 to 56 and 117 to 140; these read TYNP…MTPK and TSGV…EKKE.

It belongs to the universal ribosomal protein uS12 family. Part of the 30S ribosomal subunit. Contacts proteins S8 and S17. May interact with IF1 in the 30S initiation complex.

With S4 and S5 plays an important role in translational accuracy. Its function is as follows. Interacts with and stabilizes bases of the 16S rRNA that are involved in tRNA selection in the A site and with the mRNA backbone. Located at the interface of the 30S and 50S subunits, it traverses the body of the 30S subunit contacting proteins on the other side and probably holding the rRNA structure together. The combined cluster of proteins S8, S12 and S17 appears to hold together the shoulder and platform of the 30S subunit. This is Small ribosomal subunit protein uS12 from Malacoplasma penetrans (strain HF-2) (Mycoplasma penetrans).